Consider the following 240-residue polypeptide: Putative N-acetylmannosamine-6-phosphate 2-epimerase (240 aa).

Belongs to the NanE family.

It carries out the reaction an N-acyl-D-glucosamine 6-phosphate = an N-acyl-D-mannosamine 6-phosphate. It functions in the pathway amino-sugar metabolism; N-acetylneuraminate degradation; D-fructose 6-phosphate from N-acetylneuraminate: step 3/5. Functionally, converts N-acetylmannosamine-6-phosphate (ManNAc-6-P) to N-acetylglucosamine-6-phosphate (GlcNAc-6-P). This is Putative N-acetylmannosamine-6-phosphate 2-epimerase from Vibrio cholerae serotype O1 (strain ATCC 39315 / El Tor Inaba N16961).